The sequence spans 474 residues: 3-isopropylmalate dehydratase large subunit (474 aa).

[4Fe-4S] cluster-binding residues include cysteine 355, cysteine 415, and cysteine 418.

Belongs to the aconitase/IPM isomerase family. LeuC type 1 subfamily. Heterodimer of LeuC and LeuD. [4Fe-4S] cluster serves as cofactor.

It catalyses the reaction (2R,3S)-3-isopropylmalate = (2S)-2-isopropylmalate. Its pathway is amino-acid biosynthesis; L-leucine biosynthesis; L-leucine from 3-methyl-2-oxobutanoate: step 2/4. Its function is as follows. Catalyzes the isomerization between 2-isopropylmalate and 3-isopropylmalate, via the formation of 2-isopropylmaleate. In Shewanella sp. (strain MR-7), this protein is 3-isopropylmalate dehydratase large subunit.